A 219-amino-acid chain; its full sequence is Thiamine-phosphate synthase (219 aa).

Residues 44–48 (QFREK) and Asn79 each bind 4-amino-2-methyl-5-(diphosphooxymethyl)pyrimidine. Asp80 and Asp99 together coordinate Mg(2+). A 4-amino-2-methyl-5-(diphosphooxymethyl)pyrimidine-binding site is contributed by Ser117. 143-145 (TST) contacts 2-[(2R,5Z)-2-carboxy-4-methylthiazol-5(2H)-ylidene]ethyl phosphate. Lys146 lines the 4-amino-2-methyl-5-(diphosphooxymethyl)pyrimidine pocket. Residues Gly175 and 195–196 (IS) contribute to the 2-[(2R,5Z)-2-carboxy-4-methylthiazol-5(2H)-ylidene]ethyl phosphate site.

The protein belongs to the thiamine-phosphate synthase family. Requires Mg(2+) as cofactor.

It carries out the reaction 2-[(2R,5Z)-2-carboxy-4-methylthiazol-5(2H)-ylidene]ethyl phosphate + 4-amino-2-methyl-5-(diphosphooxymethyl)pyrimidine + 2 H(+) = thiamine phosphate + CO2 + diphosphate. The enzyme catalyses 2-(2-carboxy-4-methylthiazol-5-yl)ethyl phosphate + 4-amino-2-methyl-5-(diphosphooxymethyl)pyrimidine + 2 H(+) = thiamine phosphate + CO2 + diphosphate. The catalysed reaction is 4-methyl-5-(2-phosphooxyethyl)-thiazole + 4-amino-2-methyl-5-(diphosphooxymethyl)pyrimidine + H(+) = thiamine phosphate + diphosphate. The protein operates within cofactor biosynthesis; thiamine diphosphate biosynthesis; thiamine phosphate from 4-amino-2-methyl-5-diphosphomethylpyrimidine and 4-methyl-5-(2-phosphoethyl)-thiazole: step 1/1. In terms of biological role, condenses 4-methyl-5-(beta-hydroxyethyl)thiazole monophosphate (THZ-P) and 2-methyl-4-amino-5-hydroxymethyl pyrimidine pyrophosphate (HMP-PP) to form thiamine monophosphate (TMP). The chain is Thiamine-phosphate synthase from Bacillus cereus (strain ATCC 14579 / DSM 31 / CCUG 7414 / JCM 2152 / NBRC 15305 / NCIMB 9373 / NCTC 2599 / NRRL B-3711).